The primary structure comprises 215 residues: Somatotropin (215 aa).

The first 25 residues, 1-25 (MAPGARISLLLLITFTLLGPQRSGA), serve as a signal peptide directing secretion. His44 is a Zn(2+) binding site. The cysteines at positions 77 and 188 are disulfide-linked. Ser130 is modified (phosphoserine). Residue Glu197 coordinates Zn(2+). Cysteines 205 and 213 form a disulfide.

It belongs to the somatotropin/prolactin family.

It localises to the secreted. Functionally, plays an important role in growth control. Its major role in stimulating body growth is to stimulate the liver and other tissues to secrete IGF1. It stimulates both the differentiation and proliferation of myoblasts. It also stimulates amino acid uptake and protein synthesis in muscle and other tissues. This chain is Somatotropin (GH1), found in Trichosurus vulpecula (Brush-tailed possum).